The following is a 699-amino-acid chain: Protein phosphatase 1 regulatory subunit 37 (699 aa).

Positions 1 to 12 are enriched in pro residues; that stretch reads MEIPPQEAPPGP. The disordered stretch occupies residues 1-42; sequence MEIPPQEAPPGPGADGEAEEAPVEAPSPGPASPPADGRLKAA. Residues S50 and S56 each carry the phosphoserine modification. 5 LRR repeats span residues 220 to 240, 248 to 269, 277 to 297, 306 to 326, and 334 to 354; these read SLAV…MLLA, TLRE…AQLG, SLQI…AYIC, GLAT…AFLG, and SLET…RNLK. The disordered stretch occupies residues 467–667; that stretch reads RLQLSASMPE…PPGPEAKVGS (201 aa). Positions 510-525 are enriched in acidic residues; that stretch reads SDSDSDSEGEDRDEAD. A Phosphoserine modification is found at S566. 2 stretches are compositionally biased toward pro residues: residues 588–613 and 622–642; these read PPVP…PFPT and DPGP…PPLP.

It belongs to the PPP1R37 family. Interacts with PPP1CA.

In terms of biological role, inhibits phosphatase activity of protein phosphatase 1 (PP1) complexes. The chain is Protein phosphatase 1 regulatory subunit 37 (PPP1R37) from Bos taurus (Bovine).